Consider the following 200-residue polypeptide: Glutathione S-transferase 1-1 (200 aa).

Residues 1–73 (GSSPCRSVIM…YLVEKYGKTD (73 aa)) enclose the GST N-terminal domain. Glutathione is bound by residues Ser-2, 43 to 45 (HTI), and 57 to 59 (ESR). The 122-residue stretch at 79 to 200 (CPKKRAVINQ…AGCLEFKKFF (122 aa)) folds into the GST C-terminal domain.

The protein belongs to the GST superfamily. Theta family. Homodimer.

The enzyme catalyses RX + glutathione = an S-substituted glutathione + a halide anion + H(+). It catalyses the reaction 1,1,1-trichloro-2,2-bis(4-chlorophenyl)ethane = 1,1-dichloro-2,2-bis(4-chlorophenyl)ethylene + chloride + H(+). Functionally, conjugation of reduced glutathione to a wide number of exogenous and endogenous hydrophobic electrophiles. Has DDT dehydrochlorinase activity. This is Glutathione S-transferase 1-1 (GstD1) from Drosophila mauritiana (Fruit fly).